Reading from the N-terminus, the 795-residue chain is Probable diacylglycerol kinase 3 (795 aa).

2 EF-hand domains span residues 170–205 (TPEN…MMNV) and 215–250 (ELEQ…NIPL). Residues Asp183, Asp185, Asn187, Glu194, Asp228, Asp230, Asp232, and Glu239 each contribute to the Ca(2+) site. 2 Phorbol-ester/DAG-type zinc fingers span residues 265–316 (SHVW…ATNC) and 329–375 (YHHW…AQEC). Residues 423 to 558 (NDCRPLLVLV…MDRWQIKIEI (136 aa)) enclose the DAGKc domain.

Belongs to the eukaryotic diacylglycerol kinase family. As to quaternary structure, monomer.

It carries out the reaction a 1,2-diacyl-sn-glycerol + ATP = a 1,2-diacyl-sn-glycero-3-phosphate + ADP + H(+). Functionally, involved in AFD-neuron mediated thermotaxis. Regulates behavior to environmental temperature. Thought to have a role in olfactory adaptation by affecting diacylglycerol levels. The protein is Probable diacylglycerol kinase 3 (dgk-3) of Caenorhabditis elegans.